The chain runs to 479 residues: ATP synthase subunit beta (479 aa).

Residue 168-175 coordinates ATP; that stretch reads GGAGVGKT.

It belongs to the ATPase alpha/beta chains family. F-type ATPases have 2 components, CF(1) - the catalytic core - and CF(0) - the membrane proton channel. CF(1) has five subunits: alpha(3), beta(3), gamma(1), delta(1), epsilon(1). CF(0) has three main subunits: a(1), b(2) and c(9-12). The alpha and beta chains form an alternating ring which encloses part of the gamma chain. CF(1) is attached to CF(0) by a central stalk formed by the gamma and epsilon chains, while a peripheral stalk is formed by the delta and b chains.

It is found in the cell membrane. The enzyme catalyses ATP + H2O + 4 H(+)(in) = ADP + phosphate + 5 H(+)(out). Its function is as follows. Produces ATP from ADP in the presence of a proton gradient across the membrane. The catalytic sites are hosted primarily by the beta subunits. This is ATP synthase subunit beta from Frankia casuarinae (strain DSM 45818 / CECT 9043 / HFP020203 / CcI3).